The chain runs to 217 residues: MGMVITIDGPAASGKSSVSRELARRLGWQWVSTGAFYRGLAFAALQLQIDLDDVSTLASLTHDPVWSVKMDDERTRVFFKDQDVTDQIAHEDVGNFASKVSHYPEVRKALLDAQRNCSAGPQGLVAEGRDCGTVVFPTAEAKVYLTANSEHRAARRAAELGLDHEDMVKAQQQRDLQDSTRKVAPMAVPEDALVVDTTALNLNQVVDAVVEYVKNKI.

9 to 17 (GPAASGKSS) is a binding site for ATP.

Belongs to the cytidylate kinase family. Type 1 subfamily.

It is found in the cytoplasm. It carries out the reaction CMP + ATP = CDP + ADP. The enzyme catalyses dCMP + ATP = dCDP + ADP. This Bdellovibrio bacteriovorus (strain ATCC 15356 / DSM 50701 / NCIMB 9529 / HD100) protein is Cytidylate kinase.